The primary structure comprises 204 residues: Pyridoxal 5'-phosphate synthase subunit PdxT (204 aa).

52–54 (GES) lines the L-glutamine pocket. The active-site Nucleophile is C84. L-glutamine contacts are provided by residues R116 and 143-144 (IR). Residues H184 and E186 each act as charge relay system in the active site.

Belongs to the glutaminase PdxT/SNO family. In terms of assembly, in the presence of PdxS, forms a dodecamer of heterodimers. Only shows activity in the heterodimer.

The catalysed reaction is aldehydo-D-ribose 5-phosphate + D-glyceraldehyde 3-phosphate + L-glutamine = pyridoxal 5'-phosphate + L-glutamate + phosphate + 3 H2O + H(+). It catalyses the reaction L-glutamine + H2O = L-glutamate + NH4(+). It functions in the pathway cofactor biosynthesis; pyridoxal 5'-phosphate biosynthesis. Functionally, catalyzes the hydrolysis of glutamine to glutamate and ammonia as part of the biosynthesis of pyridoxal 5'-phosphate. The resulting ammonia molecule is channeled to the active site of PdxS. The chain is Pyridoxal 5'-phosphate synthase subunit PdxT from Pyrobaculum arsenaticum (strain DSM 13514 / JCM 11321 / PZ6).